The following is a 356-amino-acid chain: UDP-N-acetylglucosamine--N-acetylmuramyl-(pentapeptide) pyrophosphoryl-undecaprenol N-acetylglucosamine transferase (356 aa).

UDP-N-acetyl-alpha-D-glucosamine-binding positions include 12-14, Asn124, Arg163, Ser188, Ile242, 261-266, and Gln287; these read TGG and ALTVSE.

Belongs to the glycosyltransferase 28 family. MurG subfamily.

The protein localises to the cell inner membrane. The enzyme catalyses di-trans,octa-cis-undecaprenyl diphospho-N-acetyl-alpha-D-muramoyl-L-alanyl-D-glutamyl-meso-2,6-diaminopimeloyl-D-alanyl-D-alanine + UDP-N-acetyl-alpha-D-glucosamine = di-trans,octa-cis-undecaprenyl diphospho-[N-acetyl-alpha-D-glucosaminyl-(1-&gt;4)]-N-acetyl-alpha-D-muramoyl-L-alanyl-D-glutamyl-meso-2,6-diaminopimeloyl-D-alanyl-D-alanine + UDP + H(+). Its pathway is cell wall biogenesis; peptidoglycan biosynthesis. In terms of biological role, cell wall formation. Catalyzes the transfer of a GlcNAc subunit on undecaprenyl-pyrophosphoryl-MurNAc-pentapeptide (lipid intermediate I) to form undecaprenyl-pyrophosphoryl-MurNAc-(pentapeptide)GlcNAc (lipid intermediate II). This is UDP-N-acetylglucosamine--N-acetylmuramyl-(pentapeptide) pyrophosphoryl-undecaprenol N-acetylglucosamine transferase from Pseudomonas fluorescens (strain SBW25).